We begin with the raw amino-acid sequence, 315 residues long: Zinc transport protein ZntB (315 aa).

The Cytoplasmic segment spans residues 1-250 (MGFMIEHWDF…RDEKTNKNSY (250 aa)). The helical transmembrane segment at 251-271 (LFTLVATIFLPTSFLTGLLGI) threads the bilayer. The Periplasmic segment spans residues 272-282 (NIGGMPGVESS). The helical transmembrane segment at 283-303 (MAFTWFCIALIVIFGLEWLLF) threads the bilayer. The Cytoplasmic portion of the chain corresponds to 304 to 315 (KRLGFTNKTDDE).

This sequence belongs to the CorA metal ion transporter (MIT) (TC 1.A.35) family. In terms of assembly, homopentamer. Can assemble pentamers in the absence of the transmembrane regions.

The protein resides in the cell inner membrane. The enzyme catalyses Zn(2+)(out) + H(+)(out) = Zn(2+)(in) + H(+)(in). Its function is as follows. Zinc transporter. Acts as a Zn(2+):proton symporter, which likely mediates zinc ion uptake. The polypeptide is Zinc transport protein ZntB (Vibrio parahaemolyticus serotype O3:K6 (strain RIMD 2210633)).